Consider the following 356-residue polypeptide: Tyrosine recombinase XerS (356 aa).

Residues 16 to 121 (VMPWYVLDYY…ALSSLYKYLT (106 aa)) form the Core-binding (CB) domain. One can recognise a Tyr recombinase domain in the interval 169–354 (AFLDYVDKEY…VNDEQKNALD (186 aa)). Active-site residues include arginine 210, lysine 234, histidine 306, arginine 309, and histidine 332. Tyrosine 341 serves as the catalytic O-(3'-phospho-DNA)-tyrosine intermediate.

The protein belongs to the 'phage' integrase family. XerS subfamily.

It localises to the cytoplasm. With respect to regulation, ftsK is required for recombination. Functionally, site-specific tyrosine recombinase, which acts by catalyzing the cutting and rejoining of the recombining DNA molecules. Essential to convert dimers of the bacterial chromosome into monomers to permit their segregation at cell division. This Streptococcus pyogenes serotype M28 (strain MGAS6180) protein is Tyrosine recombinase XerS.